The sequence spans 196 residues: Serine/arginine-rich splicing factor RSZ22A (196 aa).

The RRM domain maps to 2 to 71 (SRVYVGNLDP…NGWRVEQSHN (70 aa)). The residue at position 48 (S48) is a Phosphoserine. Residues 58 to 70 (VDGKNGWRVEQSH) are compositionally biased toward basic and acidic residues. The tract at residues 58–196 (VDGKNGWRVE…GLKDVRRSRS (139 aa)) is disordered. A compositionally biased stretch (gly residues) spans 72–87 (RGGGGGRGGGRGGGDG). The span at 88 to 100 (GRGRGGSDLKCYE) shows a compositional bias: basic and acidic residues. The CCHC-type zinc finger occupies 96-113 (LKCYECGESGHFARECRS). The span at 119–135 (GRRRSRSRSRSPPRYRK) shows a compositional bias: basic residues. A phosphoserine mark is found at S136, S144, S146, S151, S159, S170, and S196. Low complexity predominate over residues 139–149 (YGGRRSYSPRA).

It belongs to the splicing factor SR family. RSZ subfamily. In terms of assembly, component of the spliceosome. In terms of processing, extensively phosphorylated on serine residues in the RS domain.

It is found in the nucleus. In terms of biological role, probably involved in intron recognition and spliceosome assembly. The sequence is that of Serine/arginine-rich splicing factor RSZ22A (RSZ22A) from Arabidopsis thaliana (Mouse-ear cress).